A 409-amino-acid polypeptide reads, in one-letter code: Elongation factor Tu (409 aa).

Positions 10–214 constitute a tr-type G domain; that stretch reads KPHANIGTIG…EVDAYIPTPE (205 aa). Positions 19 to 26 are G1; the sequence is GHVDHGKT. Position 19–26 (19–26) interacts with GTP; that stretch reads GHVDHGKT. Threonine 26 contacts Mg(2+). The tract at residues 60 to 64 is G2; sequence GITIN. The tract at residues 81-84 is G3; it reads DCPG. Residues 81–85 and 136–139 contribute to the GTP site; these read DCPGH and NKED. The G4 stretch occupies residues 136-139; it reads NKED. The tract at residues 174–176 is G5; sequence SAL.

This sequence belongs to the TRAFAC class translation factor GTPase superfamily. Classic translation factor GTPase family. EF-Tu/EF-1A subfamily. In terms of assembly, monomer.

It localises to the cytoplasm. The catalysed reaction is GTP + H2O = GDP + phosphate + H(+). In terms of biological role, GTP hydrolase that promotes the GTP-dependent binding of aminoacyl-tRNA to the A-site of ribosomes during protein biosynthesis. This Synechococcus elongatus (strain ATCC 33912 / PCC 7942 / FACHB-805) (Anacystis nidulans R2) protein is Elongation factor Tu.